The following is a 937-amino-acid chain: MANHVPASFLTRANALFRKNLTYQKRNIWSNVRLIVIPFYLCVLLVGIQVLFDTQVNNSADNRCGCRCIHKNGDGKCERKSCGLQYSSLTQASFCAFPNPPPLLPLLQIPRPETRLVDPARSSCRRTGSCPVTILVTGNNHTLGETLSRNLLSTSFAVNSSDHFLRNLAYNVLGTISEADYTNYLDPGIHSDLPIFQIRPYCTPTTNLSFSFRQPPITFHKEVRCVQGLNLWRNNSVEVNDEIFKGYRQGNHEEIINEVAAAYDLLDTDRNKFNVTIWYNSSYKGNFKVQDRRVKYVRVPRSVNMVSNAYLRFLRGPGTKMLFDFVKEMPKQESMLRVDIASVIGPIFLTWVIVLLFPVILNSLVYEKQQHLRIIMKMHGLGDGPYWMITYAYFLAISTLYIICLMIFGSAIGLKFFRFNDYSIQFIFYFLCINLQISIAFLVSSAFSKVETASVAAYLYVFGSGLLGGFLFQFMLEGLSFPRGWIFVMELYPGFSLYRGLYEFSQYALKRQLNGSDGMKWKYFSDSAMDEVFYIIIIEWFLALIAAYYMDRVSSSAKDPFLFLKNLIKKSPSPQRHSLQRLGSSVSVEMEKLDVVEERAKVEQLMLESSTSHAIVCDKLKKVYPGRDGNPPKMAVGGLSIAVPPGECFGMLGPNGAGKTSFINMMTGLVKPTSGTALVESLDICQDMDKVYTSMGVCPQHDLLWETLTGREHLLFYGRLKNLKGSDLNQAIEESLKSVNLSREGVADKPAGKYSGGMKRRLSVAISLIGSPKVVYMDEPSTGLDPASRRSLWTAIKGAKKHTAIILTTHSMEEAEFLCDRLGIFVDGRLQCVGNPKELKARYGGSYVLTMTTSSEHEKDVEMLIQDVSPNAKKIYHIAGTQKFEIPKDEVRIAELFQAVEKAKGNFRVFAWGLADTTLEDVFIKVARTAQASNVFS.

7 helical membrane passes run Leu-34 to Thr-54, Ile-340 to Ile-360, Phe-394 to Leu-414, Ser-423 to Val-443, Val-455 to Met-475, Gly-478 to Tyr-498, and Ala-528 to Tyr-548. Residues Asp-618 to Thr-852 enclose the ABC transporter domain. Gly-653–Thr-660 is a binding site for ATP.

Belongs to the ABC transporter superfamily. ABCA family. CPR flippase (TC 3.A.1.211) subfamily.

It is found in the membrane. In Arabidopsis thaliana (Mouse-ear cress), this protein is ABC transporter A family member 4 (ABCA4).